A 150-amino-acid chain; its full sequence is Large ribosomal subunit protein bL9 (150 aa).

This sequence belongs to the bacterial ribosomal protein bL9 family.

Functionally, binds to the 23S rRNA. The sequence is that of Large ribosomal subunit protein bL9 from Aromatoleum aromaticum (strain DSM 19018 / LMG 30748 / EbN1) (Azoarcus sp. (strain EbN1)).